We begin with the raw amino-acid sequence, 195 residues long: DnaJ homolog subfamily C member 5 (195 aa).

Residues 13–82 enclose the J domain; it reads GDSLYIVLGL…RNIYDKYGSL (70 aa). The disordered stretch occupies residues 162–195; that stretch reads DMEKEGDGAIVVQPTSATETTQLTSDSHPSYHTE. A compositionally biased stretch (polar residues) spans 174–189; the sequence is QPTSATETTQLTSDSH.

In terms of processing, palmitoylated. Palmitoylation occurs probably in the cysteine-rich domain and regulates DNAJC5 stable membrane attachment.

The protein localises to the cytoplasm. It localises to the cytosol. The protein resides in the membrane. It is found in the cytoplasmic vesicle. Its subcellular location is the secretory vesicle. The protein localises to the chromaffin granule membrane. It localises to the melanosome. The protein resides in the cell membrane. May have an important role in presynaptic function. May be involved in calcium-dependent neurotransmitter release at nerve endings. This Tetronarce californica (Pacific electric ray) protein is DnaJ homolog subfamily C member 5.